A 992-amino-acid chain; its full sequence is ATP-dependent DNA helicase PIF7 (992 aa).

Residues 1–21 (MWDGPLRSRQNLRTVAKLRSS) constitute a mitochondrion transit peptide. Disordered regions lie at residues 20–43 (SSGC…GETA), 145–182 (TVNK…TAAS), and 190–209 (LDSS…AVTQ). Composition is skewed to polar residues over residues 23-43 (CPLT…GETA), 173-182 (NVDNTTTAAS), and 191-208 (DSSS…QAVT). Residue 237 to 244 (GGAGTGKS) coordinates ATP. Residues 651-670 (QAYVALSRCTDVANLVIENF) mediate DNA binding.

It belongs to the helicase family. PIF1 subfamily. As to quaternary structure, monomer. Mg(2+) serves as cofactor.

It is found in the mitochondrion matrix. Its subcellular location is the kinetoplast. It catalyses the reaction Couples ATP hydrolysis with the unwinding of duplex DNA at the replication fork by translocating in the 5'-3' direction. This creates two antiparallel DNA single strands (ssDNA). The leading ssDNA polymer is the template for DNA polymerase III holoenzyme which synthesizes a continuous strand.. The catalysed reaction is ATP + H2O = ADP + phosphate + H(+). Functionally, DNA-dependent ATPase and 5'-3' DNA helicase required for the maintenance of mitochondrial (kinetoplast) genome stability. This is ATP-dependent DNA helicase PIF7 from Trypanosoma brucei brucei (strain 927/4 GUTat10.1).